Here is a 359-residue protein sequence, read N- to C-terminus: 3-dehydroquinate synthase (359 aa).

Residues 71 to 76, 105 to 109, 129 to 130, Lys142, and Lys151 each bind NAD(+); these read DGEAYK, GVIGD, and TT. Glu184, His247, and His264 together coordinate Zn(2+).

It belongs to the sugar phosphate cyclases superfamily. Dehydroquinate synthase family. Co(2+) serves as cofactor. Requires Zn(2+) as cofactor. NAD(+) is required as a cofactor.

The protein localises to the cytoplasm. It carries out the reaction 7-phospho-2-dehydro-3-deoxy-D-arabino-heptonate = 3-dehydroquinate + phosphate. The protein operates within metabolic intermediate biosynthesis; chorismate biosynthesis; chorismate from D-erythrose 4-phosphate and phosphoenolpyruvate: step 2/7. In terms of biological role, catalyzes the conversion of 3-deoxy-D-arabino-heptulosonate 7-phosphate (DAHP) to dehydroquinate (DHQ). The protein is 3-dehydroquinate synthase of Burkholderia ambifaria (strain MC40-6).